The sequence spans 506 residues: MAPPQTIPRRGLFIGGAWREPCLGRRLPVVNPATEATIGDIPAGTAEDVEIAVAAARDAFSRDGGRHWSRAPGAVRANFLRAIAAKIKDRKSELALLETLDSGKPLDEASGDMDDVAACFEYYADLAEALDGKQQSPISLPMENFKSYVLKEPIGVVGLITPWNYPLLMATWKVAPALAAGCTTILKPSELASVSCLELGAICMEIGLPPGVLNIITGLGPEAGAPLSSHSHVDKVAFTGSTETGKRIMISAAQMVKPVSLELGGKSPLIVFDDIGDIDKAVEWTMFGIFANAGQVCSATSRLLLHEKIAKKFLDRLVAWAKNIKVSDPLEEGCRLGSVISEGQYEKIKKFISTARSEGATILYGGGRPQHLRRGFFLEPTIITDVSTSMQIWQEEVFGPVICVKEFRTESEAVELANDTHYGLAGAVISNDQERCERISKALHSGIIWINCSQPCFVQAPWGGNKRSGFGRELGEWGLDNYLTVKQVTKYCSDEPWGWYQPPSKL.

D101 is a binding site for Na(+). NAD(+) contacts are provided by residues 161–163 (TPW) and 187–190 (KPSE). Position 191 (L191) interacts with Na(+). NAD(+) is bound by residues 241–244 (STET) and E262. Catalysis depends on E262, which acts as the Proton acceptor. Catalysis depends on C297, which acts as the Nucleophile. 2 residues coordinate NAD(+): E396 and W462.

Belongs to the aldehyde dehydrogenase family.

It carries out the reaction 4-aminobutanal + NAD(+) + H2O = 4-aminobutanoate + NADH + 2 H(+). It catalyses the reaction 3-aminopropanal + NAD(+) + H2O = beta-alanine + NADH + 2 H(+). The catalysed reaction is 4-(trimethylamino)butanal + NAD(+) + H2O = 4-(trimethylamino)butanoate + NADH + 2 H(+). The enzyme catalyses 4-guanidinobutanal + NAD(+) + H2O = 4-guanidinobutanoate + NADH + 2 H(+). It functions in the pathway amine and polyamine biosynthesis; betaine biosynthesis via choline pathway; betaine from betaine aldehyde: step 1/1. Its function is as follows. Dehydrogenase that catalyzes the oxidation of several aminoaldehydes. Metabolizes and detoxifies aldehyde products of polyamine degradation to non-toxic amino acids. Catalyzes the oxidation of 4-aminobutanal and 3-aminopropanal to 4-aminobutanoate and beta-alanine, respectively. Catalyzes the oxidation of 4-(trimethylamino)butanal and 4-guanidinobutanal to 4-trimethylammoniobutanoate and 4-guanidinobutanoate, respectively. The sequence is that of Aminoaldehyde dehydrogenase 2 from Zea mays (Maize).